The sequence spans 442 residues: Histidinol dehydrogenase (442 aa).

Positions 132, 194, and 217 each coordinate NAD(+). Substrate is bound by residues S243, Q265, and H268. The Zn(2+) site is built by Q265 and H268. Residues E332 and H333 each act as proton acceptor in the active site. H333, D366, E420, and H425 together coordinate substrate. D366 contributes to the Zn(2+) binding site. H425 contributes to the Zn(2+) binding site.

This sequence belongs to the histidinol dehydrogenase family. The cofactor is Zn(2+).

The enzyme catalyses L-histidinol + 2 NAD(+) + H2O = L-histidine + 2 NADH + 3 H(+). It functions in the pathway amino-acid biosynthesis; L-histidine biosynthesis; L-histidine from 5-phospho-alpha-D-ribose 1-diphosphate: step 9/9. In terms of biological role, catalyzes the sequential NAD-dependent oxidations of L-histidinol to L-histidinaldehyde and then to L-histidine. The polypeptide is Histidinol dehydrogenase (Idiomarina loihiensis (strain ATCC BAA-735 / DSM 15497 / L2-TR)).